Here is a 48-residue protein sequence, read N- to C-terminus: Delta-ctenitoxin-Pn1b (48 aa).

5 disulfides stabilise this stretch: Cys-1–Cys-15, Cys-8–Cys-21, Cys-12–Cys-48, Cys-14–Cys-31, and Cys-23–Cys-29.

This sequence belongs to the neurotoxin 03 (Tx2) family. 05 subfamily. In terms of tissue distribution, expressed by the venom gland.

The protein localises to the secreted. Insecticidal neurotoxin that reversibly inhibits the N-methyl-D-aspartate (NMDA)-subtype of ionotropic glutamate receptor (GRIN) and inhibits inactivation of insect sodium channels (Nav). Inhibits glutamate uptake in rat brain synaptosomes. In vivo, induces immediate excitatory effects when injected intrathoracically in houseflies and cockroaches. The chain is Delta-ctenitoxin-Pn1b from Phoneutria nigriventer (Brazilian armed spider).